An 841-amino-acid polypeptide reads, in one-letter code: Taste receptor type 1 member 1 (841 aa).

The first 20 residues, 1-20, serve as a signal peptide directing secretion; it reads MLLCTARLVGLQLLISCCWA. Topologically, residues 21–567 are extracellular; it reads FACHSTESSP…VFLALREHTS (547 aa). N-linked (GlcNAc...) asparagine glycosylation is found at N87, N88, N95, N291, N479, and N529. The helical transmembrane segment at 568–588 threads the bilayer; it reads WVLLAANTLLLLLLLGTAGLF. The Cytoplasmic segment spans residues 589–603; the sequence is AWHLDTPVVRSAGGR. The chain crosses the membrane as a helical span at residues 604–624; that stretch reads LCFLMLGSLAAGSGSLYGFFG. Over 625 to 639 the chain is Extracellular; the sequence is EPTRPACLLRQALFA. A helical transmembrane segment spans residues 640-660; that stretch reads LGFTIFLSCLTVRSFQLIIIF. The Cytoplasmic segment spans residues 661-680; sequence KFSTKVPTFYHAWVQNHGAG. Residues 681 to 701 traverse the membrane as a helical segment; sequence LFVMISSAAQLLICLTWLVVW. Residues 702-725 are Extracellular-facing; the sequence is TPLPAREYQRFPHLVMLECTETNS. The chain crosses the membrane as a helical span at residues 726–746; that stretch reads LGFILAFLYNGLLSISAFACS. The Cytoplasmic segment spans residues 747-761; the sequence is YLGKDLPENYNEAKC. The helical transmembrane segment at 762 to 782 threads the bilayer; it reads VTFSLLFNFVSWIAFFTTASV. The Extracellular portion of the chain corresponds to 783 to 795; the sequence is YDGKYLPAANMMA. Residues 796–816 traverse the membrane as a helical segment; the sequence is GLSSLSSGFGGYFLPKCYVIL. Residues 817–841 lie on the Cytoplasmic side of the membrane; sequence CRPDLNSTEHFQASIQDYTRRCGST.

The protein belongs to the G-protein coupled receptor 3 family. TAS1R subfamily. In terms of assembly, forms heterodimers with TAS1R3.

Its subcellular location is the cell membrane. Putative taste receptor. TAS1R1/TAS1R3 responds to the umami taste stimulus (the taste of monosodium glutamate). Sequence differences within and between species can significantly influence the selectivity and specificity of taste responses. The chain is Taste receptor type 1 member 1 (TAS1R1) from Homo sapiens (Human).